We begin with the raw amino-acid sequence, 67 residues long: Beta-defensin 110 (67 aa).

Residues 1–19 form the signal peptide; sequence MKIQLFFFILLFWVTILPA. Cystine bridges form between cysteine 35-cysteine 63, cysteine 42-cysteine 56, and cysteine 46-cysteine 64.

The protein belongs to the beta-defensin family.

It is found in the secreted. Has antibacterial activity. In Pan troglodytes (Chimpanzee), this protein is Beta-defensin 110 (DEFB110).